We begin with the raw amino-acid sequence, 1137 residues long: 2'-5'-oligoadenylate synthase 3 (1137 aa).

An N-acetylmethionine modification is found at M1. The segment at 6 to 341 is OAS domain 1; the sequence is TPAGALDKLV…GALVQPWEGP (336 aa). Interaction with dsRNA stretches follow at residues 12 to 56 and 185 to 199; these read DKLV…VIRI and ELRK…VKLK. The linker stretch occupies residues 342–461; the sequence is GLPCAGILDL…GSQMGPDLSQ (120 aa). The span at 434-453 shows a compositional bias: polar residues; sequence QSTASSNTPPGHSSMSTAGS. Positions 434–462 are disordered; it reads QSTASSNTPPGHSSMSTAGSQMGPDLSQI. OAS domain regions lie at residues 462-792 and 800-1134; these read IPSK…PWDV and TPAQ…WPVK. An ATP-binding site is contributed by S854. Mg(2+)-binding residues include D866, D868, and D938. R997, K1000, and Q1019 together coordinate ATP.

It belongs to the 2-5A synthase family. Monomer. Requires Mg(2+) as cofactor.

The protein resides in the cytoplasm. The protein localises to the nucleus. It catalyses the reaction 3 ATP = 5'-triphosphoadenylyl-(2'-&gt;5')-adenylyl-(2'-&gt;5')-adenosine + 2 diphosphate. Its activity is regulated as follows. Produced as a latent enzyme which is activated by dsRNA generated during the course of viral infection. Strongly activated by long dsRNAs at least 50 nucleotides in length. ssRNA does not activate the enzyme. Its function is as follows. Interferon-induced, dsRNA-activated antiviral enzyme which plays a critical role in cellular innate antiviral response. In addition, it may also play a role in other cellular processes such as apoptosis, cell growth, differentiation and gene regulation. Synthesizes preferentially dimers of 2'-5'-oligoadenylates (2-5A) from ATP which then bind to the inactive monomeric form of ribonuclease L (RNase L) leading to its dimerization and subsequent activation. Activation of RNase L leads to degradation of cellular as well as viral RNA, resulting in the inhibition of protein synthesis, thus terminating viral replication. Can mediate the antiviral effect via the classical RNase L-dependent pathway or an alternative antiviral pathway independent of RNase L. This chain is 2'-5'-oligoadenylate synthase 3 (Oas3), found in Rattus norvegicus (Rat).